We begin with the raw amino-acid sequence, 482 residues long: tRNA sulfurtransferase (482 aa).

Residues 61-165 (LAIRDALTRI…DDRLLLIKGR (105 aa)) form the THUMP domain. ATP contacts are provided by residues 183–184 (LI), lysine 265, glycine 287, and glutamine 296. Cysteines 344 and 456 form a disulfide. The Rhodanese domain maps to 404–482 (FGANDVILDI…GFANVKVYRP (79 aa)). Cysteine 456 (cysteine persulfide intermediate) is an active-site residue.

Belongs to the ThiI family.

The protein resides in the cytoplasm. It carries out the reaction [ThiI sulfur-carrier protein]-S-sulfanyl-L-cysteine + a uridine in tRNA + 2 reduced [2Fe-2S]-[ferredoxin] + ATP + H(+) = [ThiI sulfur-carrier protein]-L-cysteine + a 4-thiouridine in tRNA + 2 oxidized [2Fe-2S]-[ferredoxin] + AMP + diphosphate. The catalysed reaction is [ThiS sulfur-carrier protein]-C-terminal Gly-Gly-AMP + S-sulfanyl-L-cysteinyl-[cysteine desulfurase] + AH2 = [ThiS sulfur-carrier protein]-C-terminal-Gly-aminoethanethioate + L-cysteinyl-[cysteine desulfurase] + A + AMP + 2 H(+). The protein operates within cofactor biosynthesis; thiamine diphosphate biosynthesis. Functionally, catalyzes the ATP-dependent transfer of a sulfur to tRNA to produce 4-thiouridine in position 8 of tRNAs, which functions as a near-UV photosensor. Also catalyzes the transfer of sulfur to the sulfur carrier protein ThiS, forming ThiS-thiocarboxylate. This is a step in the synthesis of thiazole, in the thiamine biosynthesis pathway. The sulfur is donated as persulfide by IscS. The chain is tRNA sulfurtransferase from Salmonella arizonae (strain ATCC BAA-731 / CDC346-86 / RSK2980).